The sequence spans 77 residues: Probable Vpr-like protein (77 aa).

Residues 34–42 (LIRLLQGLL) carry the Nuclear export signal motif. The short motif at 44 to 53 (RLRFRKPKSK) is the Nuclear localization signal element.

It localises to the virion. The protein localises to the host nucleus. Its function is as follows. Seems to function as a Vpr-like protein, since it mediates host cell cycle arrest in G2 phase. Cell cycle arrest creates a favorable environment for maximizing viral expression and production. This chain is Probable Vpr-like protein, found in Felidae (cat family).